Here is a 604-residue protein sequence, read N- to C-terminus: Glucose oxidase 2 (604 aa).

Positions 1-16 (MKLLGLLSGLVVVATA) are cleaved as a signal peptide. Residues Leu49 and Thr50 each coordinate FAD. An N-linked (GlcNAc...) asparagine glycan is attached at Asn63. Position 70 (Glu70) interacts with FAD. An N-linked (GlcNAc...) asparagine glycan is attached at Asn109. Ser123, Asn127, Gly128, and Ser130 together coordinate FAD. An intrachain disulfide couples Cys184 to Cys226. Residue Asn214 is glycosylated (N-linked (GlcNAc...) asparagine). Val270 is a binding site for FAD. 3 N-linked (GlcNAc...) asparagine glycosylation sites follow: Asn375, Asn408, and Asn517. The active-site Proton acceptor is His536. Residues Arg557 and Val558 each coordinate O2. Residues Gly569 and Met581 each coordinate FAD. Residue Asn600 is glycosylated (N-linked (GlcNAc...) asparagine).

The protein belongs to the GMC oxidoreductase family. In terms of assembly, homodimer. The cofactor is FAD.

It localises to the secreted. The protein localises to the cell wall. It is found in the cytoplasm. Its subcellular location is the extracellular space. The protein resides in the extracellular matrix. The enzyme catalyses beta-D-glucose + O2 = D-glucono-1,5-lactone + H2O2. In terms of biological role, glucose oxidase catalyzes the oxidation of beta-D-glucose to D-glucono-delta-lactone and hydrogen peroxide in the presence of molecular oxygen. D-glucono-delta-lactone is sequentially hydrolyzed by lactonase to D-gluconic acid, and the resulting hydrogen peroxide is hydrolyzed by catalase to oxygen and water. Acts as a key factor contributing to fungal disease of apple. The production of gluconic acid leads to host tissue acidification that enhances the expression of pectolytic enzymes and the establishment of conditions for necrotrophic development of P.expansum. This is Glucose oxidase 2 from Penicillium expansum (Blue mold rot fungus).